Here is a 126-residue protein sequence, read N- to C-terminus: Fluoride-specific ion channel FluC (126 aa).

4 consecutive transmembrane segments (helical) span residues 7-27 (LWLA…VLLL), 36-56 (FPAA…LTLA), 74-94 (GVLG…GLLL), and 98-118 (GGLA…AAVA). Residues glycine 77 and threonine 80 each coordinate Na(+).

The protein belongs to the fluoride channel Fluc/FEX (TC 1.A.43) family.

It localises to the cell membrane. It catalyses the reaction fluoride(in) = fluoride(out). Its activity is regulated as follows. Na(+) is not transported, but it plays an essential structural role and its presence is essential for fluoride channel function. Fluoride-specific ion channel. Important for reducing fluoride concentration in the cell, thus reducing its toxicity. The sequence is that of Fluoride-specific ion channel FluC from Deinococcus radiodurans (strain ATCC 13939 / DSM 20539 / JCM 16871 / CCUG 27074 / LMG 4051 / NBRC 15346 / NCIMB 9279 / VKM B-1422 / R1).